Here is a 209-residue protein sequence, read N- to C-terminus: Orotate phosphoribosyltransferase (209 aa).

5-phospho-alpha-D-ribose 1-diphosphate is bound by residues arginine 96, lysine 100, histidine 102, and 122 to 130 (EDLISTGGS). Serine 126 serves as a coordination point for orotate.

This sequence belongs to the purine/pyrimidine phosphoribosyltransferase family. PyrE subfamily. As to quaternary structure, homodimer. The cofactor is Mg(2+).

The enzyme catalyses orotidine 5'-phosphate + diphosphate = orotate + 5-phospho-alpha-D-ribose 1-diphosphate. It functions in the pathway pyrimidine metabolism; UMP biosynthesis via de novo pathway; UMP from orotate: step 1/2. In terms of biological role, catalyzes the transfer of a ribosyl phosphate group from 5-phosphoribose 1-diphosphate to orotate, leading to the formation of orotidine monophosphate (OMP). The chain is Orotate phosphoribosyltransferase from Listeria monocytogenes serotype 4b (strain F2365).